A 91-amino-acid polypeptide reads, in one-letter code: Putative transmembrane protein ORF91a (91 aa).

3 helical membrane passes run 17 to 37, 40 to 60, and 69 to 89; these read TGIS…VGLA, AFLG…LLFM, and GIGF…YIST.

It localises to the host membrane. The protein is Putative transmembrane protein ORF91a of Acidianus convivator (ABV).